Here is a 528-residue protein sequence, read N- to C-terminus: Linear element-associated protein hop1 (528 aa).

An HORMA domain is found at 11-212 (TKSDFTLKNL…RGEFKDIVSF (202 aa)). Residues 334–385 (LLNCECGDSTEDSEMFQCERCDGWVHCACYGFESDSDPRQPNQLLCYTCLLV) form a PHD-type zinc finger. Zn(2+) contacts are provided by C337, C339, C351, C354, H359, C362, C379, and C382. The disordered stretch occupies residues 507-528 (RPKKVSKTSNTKETDTMKPLRI). A compositionally biased stretch (basic and acidic residues) spans 516–528 (NTKETDTMKPLRI).

Interacts (via N-terminus) with rec10; the interaction is direct. Interacts (via C-terminus) with rec15 (via C-terminus); the interaction is direct.

The protein resides in the nucleus. The protein localises to the chromosome. In terms of biological role, facilitates initiation of meiotic recombination and DNA double-strand break (DSB) formation at DSB hotspot sites by enhancing the interaction between rec10 and rec15. The chain is Linear element-associated protein hop1 from Schizosaccharomyces pombe (strain 972 / ATCC 24843) (Fission yeast).